Reading from the N-terminus, the 215-residue chain is Urease accessory protein UreG 2 (215 aa).

11–18 (GPVGSGKT) serves as a coordination point for GTP.

This sequence belongs to the SIMIBI class G3E GTPase family. UreG subfamily. Homodimer. UreD, UreF and UreG form a complex that acts as a GTP-hydrolysis-dependent molecular chaperone, activating the urease apoprotein by helping to assemble the nickel containing metallocenter of UreC. The UreE protein probably delivers the nickel.

It is found in the cytoplasm. Facilitates the functional incorporation of the urease nickel metallocenter. This process requires GTP hydrolysis, probably effectuated by UreG. The sequence is that of Urease accessory protein UreG 2 from Methylorubrum populi (strain ATCC BAA-705 / NCIMB 13946 / BJ001) (Methylobacterium populi).